Here is a 134-residue protein sequence, read N- to C-terminus: Large ribosomal subunit protein uL16c (134 aa).

Positions 1-22 (MLSPKRTRFRKQHRGRMKGISH) are disordered.

Belongs to the universal ribosomal protein uL16 family. As to quaternary structure, part of the 50S ribosomal subunit.

Its subcellular location is the plastid. It is found in the chloroplast. In Nicotiana tomentosiformis (Tobacco), this protein is Large ribosomal subunit protein uL16c.